A 185-amino-acid chain; its full sequence is MTWRSEHIWIDLISGSRKKSNFCWAFLLFLGSLGFVLVGTSSYLGRNLISSFPPQQITFFPQGLVMSFYGIAGLFISCYLWCTILWNVGSGYDLFDRKEGIVRIFRWGFPGKSRRIVLRFLMKDIQSDRTEVKEGVSARRVPYMEIRGQGAIPLIRTDENFTTRREIEQKAAELAYFLRVPIEVF.

The next 2 membrane-spanning stretches (helical) occupy residues 21-43 (NFCW…TSSY) and 63-85 (GLVM…CTIL).

The protein belongs to the Ycf4 family.

The protein localises to the plastid. Its subcellular location is the chloroplast thylakoid membrane. Its function is as follows. Seems to be required for the assembly of the photosystem I complex. In Brassica oleracea (Wild cabbage), this protein is Photosystem I assembly protein Ycf4.